The chain runs to 310 residues: Ribonuclease Z (310 aa).

Residues histidine 64, histidine 66, aspartate 68, histidine 69, histidine 146, aspartate 215, and histidine 273 each contribute to the Zn(2+) site. Aspartate 68 functions as the Proton acceptor in the catalytic mechanism.

It belongs to the RNase Z family. In terms of assembly, homodimer. The cofactor is Zn(2+).

It catalyses the reaction Endonucleolytic cleavage of RNA, removing extra 3' nucleotides from tRNA precursor, generating 3' termini of tRNAs. A 3'-hydroxy group is left at the tRNA terminus and a 5'-phosphoryl group is left at the trailer molecule.. In terms of biological role, zinc phosphodiesterase, which displays some tRNA 3'-processing endonuclease activity. Probably involved in tRNA maturation, by removing a 3'-trailer from precursor tRNA. This is Ribonuclease Z from Aeropyrum pernix (strain ATCC 700893 / DSM 11879 / JCM 9820 / NBRC 100138 / K1).